A 155-amino-acid polypeptide reads, in one-letter code: Large ribosomal subunit protein uL15 (155 aa).

The span at 1 to 13 (MKLNELRDAEGAT) shows a compositional bias: basic and acidic residues. The segment at 1-41 (MKLNELRDAEGATKARKRVGRGIGSGSGKTGGRGVKGQKSR) is disordered. Residues 21-35 (RGIGSGSGKTGGRGV) are compositionally biased toward gly residues.

The protein belongs to the universal ribosomal protein uL15 family. As to quaternary structure, part of the 50S ribosomal subunit.

Binds to the 23S rRNA. This chain is Large ribosomal subunit protein uL15, found in Chelativorans sp. (strain BNC1).